An 846-amino-acid polypeptide reads, in one-letter code: Integrin beta-PS (846 aa).

The signal sequence occupies residues 1-28 (MILERNRRCQLALLMIAILAAIAGQTDA). The Extracellular segment spans residues 29–777 (QKAAKLTAVS…NKECPAKVFM (749 aa)). Cysteines 46 and 55 form a disulfide. Residue N72 is glycosylated (N-linked (GlcNAc...) asparagine). The region spanning 186-419 (DLYYLMDLSK…ELVKEEYRKI (234 aa)) is the VWFA domain. C249 and C252 form a disulfide bridge. N-linked (GlcNAc...) asparagine glycans are attached at residues N266 and N277. A disulfide bridge links C300 with C341. N-linked (GlcNAc...) asparagine glycosylation is found at N403 and N428. Intrachain disulfides connect C441/C453, C473/C741, C507/C530, C522/C533, C535/C544, C546/C579, C561/C577, C571/C582, C584/C599, C601/C624, C606/C622, C614/C627, C629/C638, C640/C664, C647/C662, C656/C667, C669/C682, C685/C688, C692/C701, C698/C771, and C719/C749. 4 I-EGF domains span residues 507 to 545 (CENP…NKCE), 546 to 600 (CSAT…KHCE), 601 to 639 (CDNF…SNCG), and 640 to 683 (CQES…RHCE). An N-linked (GlcNAc...) asparagine glycan is attached at N557. N-linked (GlcNAc...) asparagine glycosylation is present at N603. N644 is a glycosylation site (N-linked (GlcNAc...) asparagine). An N-linked (GlcNAc...) asparagine glycan is attached at N718. The chain crosses the membrane as a helical span at residues 778–798 (LGIVMGVIAAIVLVGLAILLL). Over 799–846 (WKLLTTIHDRREFARFEKERMNAKWDTGENPIYKQATSTFKNPMYAGK) the chain is Cytoplasmic. Phosphotyrosine occurs at positions 831 and 843.

This sequence belongs to the integrin beta chain family. As to quaternary structure, heterodimer of an alpha and a beta subunit. Beta-PS associates with either alpha-PS1, alpha-PS2, alpha-PS3, alpha-PS4 or alpha-PS5. In terms of tissue distribution, in ovaries, strongly expressed in follicle cells. In oocytes, expressed in the forming dorsal appendages (at protein level). Expressed in the embryonic dorsal cuticle, the larval eye and the wing imaginal disk. In testes, detected at the interface between somatic hub cells and cyst stem cells.

It localises to the cell membrane. It is found in the apical cell membrane. Its subcellular location is the lateral cell membrane. The protein resides in the basal cell membrane. Its function is as follows. Integrin alpha-PS1/beta-PS is a receptor for laminin. Integrin alpha-PS2/beta-PS is a receptor for Tig, wb and Ten-m. Contributes to endodermal integrity and adhesion between the midgut epithelium and the surrounding visceral muscle. Essential for migration of the primordial midgut cells and for maintaining, but not establishing, cell polarity in the midgut epithelium. The two beta subunits mediate midgut migration by distinct mechanisms: beta-PS requires rhea/talin and Itgbn does not. Required for rhea/talin correct cellular localization in the midgut. Required for many embryonic (dorsal closure and somatic muscle attachments) and postembryonic developmental processes (attachment between cell layers of imaginal disks, organization of ommatidial arrays and flight muscle development). Involved in the function and/or development of the olfactory system. In the testes, essential for shv-dependent maintenance of somatic hub cells and their localization to the apical tip. Plays a role in timely border cell migration during oogenesis. The polypeptide is Integrin beta-PS (mys) (Drosophila melanogaster (Fruit fly)).